The following is a 946-amino-acid chain: Atos homolog protein A (946 aa).

The transactivation domain 1 (TAD1) stretch occupies residues 24-32; the sequence is ALLITEGRT. The span at 34–43 shows a compositional bias: basic and acidic residues; sequence EHSVKGRTEG. 4 disordered regions span residues 34–58, 246–271, 484–524, and 547–567; these read EHSV…APNK, SVTQ…FTKP, FQSS…TGNQ, and SCTD…SQKV. Composition is skewed to polar residues over residues 247–267 and 484–500; these read VTQP…SQHA and FQSS…NENI. 2 stretches are compositionally biased toward basic and acidic residues: residues 503 to 517 and 547 to 560; these read LPEK…HGEI and SCTD…KDNP. The interval 749 to 806 is required for macropage invasion; it reads LLGNFEESVLNYRFEPLGVVEGFTAEVGASGIFCPTHMTLPVKVSFYSVSDDNAPSPY. The transactivation domain 2 (TAD2) stretch occupies residues 833 to 841; the sequence is FNPNKTVVK.

It belongs to the ATOS family.

It localises to the nucleus. Its function is as follows. Transcription regulator that syncronizes transcriptional and translational programs to promote macrophage invasion of tissues. The polypeptide is Atos homolog protein A (atosa) (Xenopus tropicalis (Western clawed frog)).